A 204-amino-acid chain; its full sequence is RNA-free ribonuclease P (204 aa).

This sequence belongs to the HARP family.

The catalysed reaction is Endonucleolytic cleavage of RNA, removing 5'-extranucleotides from tRNA precursor.. Its function is as follows. RNA-free RNase P that catalyzes the removal of the 5'-leader sequence from pre-tRNA to produce the mature 5'-terminus. The protein is RNA-free ribonuclease P of Pyrococcus abyssi (strain GE5 / Orsay).